The primary structure comprises 164 residues: MVNSVIFFDITVDGKPLGRISIKQFADKIPKTAENFRALSTGEKGFRYKGSCFHRIIPGFMCQGGDFTHPNGTGDKSIYGEKFDDENLIRKHTGSGILSMANAGPNTNGSQFFICTAKTEWLDGKHVAFGKVKERVNIVEAMEHFGYRNSKTSKKITIADCGQF.

In terms of domain architecture, PPIase cyclophilin-type spans 7–163 (FFDITVDGKP…KKITIADCGQ (157 aa)).

Belongs to the cyclophilin-type PPIase family. PPIase A subfamily.

It localises to the cytoplasm. The catalysed reaction is [protein]-peptidylproline (omega=180) = [protein]-peptidylproline (omega=0). In terms of biological role, PPIases accelerate the folding of proteins. It catalyzes the cis-trans isomerization of proline imidic peptide bonds in oligopeptides. The polypeptide is Peptidyl-prolyl cis-trans isomerase A-like 4G (PPIAL4G) (Homo sapiens (Human)).